Here is a 337-residue protein sequence, read N- to C-terminus: D-alanine--D-alanine ligase (337 aa).

The region spanning 124 to 330 (KMWFSALGIP…FTEYLSLVIN (207 aa)) is the ATP-grasp domain. 154-209 (ALAQWGSIFVKAASQGSSVGCYKVDDSAKVAGVLKDAFGYAPYVIVEKTIKARELE) lines the ATP pocket. Mg(2+) contacts are provided by Asp284, Glu297, and Asn299.

It belongs to the D-alanine--D-alanine ligase family. Mg(2+) is required as a cofactor. Requires Mn(2+) as cofactor.

The protein resides in the cytoplasm. The catalysed reaction is 2 D-alanine + ATP = D-alanyl-D-alanine + ADP + phosphate + H(+). It functions in the pathway cell wall biogenesis; peptidoglycan biosynthesis. Cell wall formation. The sequence is that of D-alanine--D-alanine ligase from Shewanella baltica (strain OS223).